The primary structure comprises 317 residues: 2,3-dihydroxyphenylpropionate/2,3-dihydroxicinnamic acid 1,2-dioxygenase (317 aa).

Histidine 115 (proton donor) is an active-site residue. The Proton acceptor role is filled by histidine 179.

Belongs to the LigB/MhpB extradiol dioxygenase family. As to quaternary structure, homotetramer. It depends on Fe(2+) as a cofactor.

It catalyses the reaction 3-(2,3-dihydroxyphenyl)propanoate + O2 = (2Z,4E)-2-hydroxy-6-oxonona-2,4-dienedioate + H(+). It carries out the reaction (2E)-3-(2,3-dihydroxyphenyl)prop-2-enoate + O2 = (2Z,4E,7E)-2-hydroxy-6-oxonona-2,4,7-trienedioate + H(+). It functions in the pathway aromatic compound metabolism; 3-phenylpropanoate degradation. Catalyzes the non-heme iron(II)-dependent oxidative cleavage of 2,3-dihydroxyphenylpropionic acid and 2,3-dihydroxicinnamic acid into 2-hydroxy-6-ketononadienedioate and 2-hydroxy-6-ketononatrienedioate, respectively. This chain is 2,3-dihydroxyphenylpropionate/2,3-dihydroxicinnamic acid 1,2-dioxygenase, found in Paraburkholderia phymatum (strain DSM 17167 / CIP 108236 / LMG 21445 / STM815) (Burkholderia phymatum).